The chain runs to 366 residues: Phosphate acyltransferase (366 aa).

Positions 334–366 are disordered; sequence ESAKNKETQSKQASTKNTAPKTSETTKESQQSL. Residues 343–366 show a composition bias toward polar residues; that stretch reads SKQASTKNTAPKTSETTKESQQSL.

Belongs to the PlsX family. As to quaternary structure, homodimer. Probably interacts with PlsY.

It is found in the cytoplasm. It carries out the reaction a fatty acyl-[ACP] + phosphate = an acyl phosphate + holo-[ACP]. Its pathway is lipid metabolism; phospholipid metabolism. In terms of biological role, catalyzes the reversible formation of acyl-phosphate (acyl-PO(4)) from acyl-[acyl-carrier-protein] (acyl-ACP). This enzyme utilizes acyl-ACP as fatty acyl donor, but not acyl-CoA. This chain is Phosphate acyltransferase, found in Onion yellows phytoplasma (strain OY-M).